Reading from the N-terminus, the 54-residue chain is Photoreceptor disk component PRCD (54 aa).

Residue cysteine 2 is the site of S-palmitoyl cysteine attachment. The disordered stretch occupies residues 24 to 54 (QPEPSGADGAVVGSRSERDLQSSGRKEEPLK). Residues 38-54 (RSERDLQSSGRKEEPLK) show a composition bias toward basic and acidic residues.

This sequence belongs to the PRCD family. As to quaternary structure, interacts with RHO/rhodopsin; the interaction promotes PRCD stability. Post-translationally, palmitoylated at Cys-2. Palmitoylation is essential for protein stability and trafficking to the photoreceptor outer segment, but does not appear to be essential for membrane localization. Probably palmitoylated by ZDHHC3. In terms of processing, phosphorylated. Expressed in retina.

It is found in the cell projection. The protein resides in the cilium. It localises to the photoreceptor outer segment. The protein localises to the membrane. Its subcellular location is the endoplasmic reticulum. It is found in the golgi apparatus. Involved in vision. The chain is Photoreceptor disk component PRCD from Canis lupus familiaris (Dog).